Reading from the N-terminus, the 386-residue chain is Methionine import ATP-binding protein MetN 2 (386 aa).

The ABC transporter domain occupies 32–272 (VIFDDVGKVF…PQHDATRALL (241 aa)). Position 69–76 (69–76 (GRSGAGKS)) interacts with ATP.

It belongs to the ABC transporter superfamily. Methionine importer (TC 3.A.1.24) family. In terms of assembly, the complex is composed of two ATP-binding proteins (MetN), two transmembrane proteins (MetI) and a solute-binding protein (MetQ).

The protein resides in the cell inner membrane. The enzyme catalyses L-methionine(out) + ATP + H2O = L-methionine(in) + ADP + phosphate + H(+). The catalysed reaction is D-methionine(out) + ATP + H2O = D-methionine(in) + ADP + phosphate + H(+). Its function is as follows. Part of the ABC transporter complex MetNIQ involved in methionine import. Responsible for energy coupling to the transport system. This is Methionine import ATP-binding protein MetN 2 from Paraburkholderia xenovorans (strain LB400).